A 353-amino-acid chain; its full sequence is Phosphoribosylformylglycinamidine cyclo-ligase (353 aa).

It belongs to the AIR synthase family.

Its subcellular location is the cytoplasm. It catalyses the reaction 2-formamido-N(1)-(5-O-phospho-beta-D-ribosyl)acetamidine + ATP = 5-amino-1-(5-phospho-beta-D-ribosyl)imidazole + ADP + phosphate + H(+). It functions in the pathway purine metabolism; IMP biosynthesis via de novo pathway; 5-amino-1-(5-phospho-D-ribosyl)imidazole from N(2)-formyl-N(1)-(5-phospho-D-ribosyl)glycinamide: step 2/2. This Methylocella silvestris (strain DSM 15510 / CIP 108128 / LMG 27833 / NCIMB 13906 / BL2) protein is Phosphoribosylformylglycinamidine cyclo-ligase.